Reading from the N-terminus, the 375-residue chain is G-protein coupled estrogen receptor 1 (375 aa).

An N-acetylmethionine modification is found at Met-1. At 1–62 (MDVTSQARGV…QQYVIGLFLS (62 aa)) the chain is on the extracellular side. N-linked (GlcNAc...) asparagine glycans are attached at residues Asn-25, Asn-32, and Asn-44. The chain crosses the membrane as a helical span at residues 63–84 (CLYTIFLFPIGFVGNILILVVN). Residues 85 to 96 (ISFREKMTIPDL) lie on the Cytoplasmic side of the membrane. Residues 97 to 120 (YFINLAVADLILVADSLIEVFNLH) form a helical membrane-spanning segment. Residues 121–132 (ERYYDIAVLCTF) lie on the Extracellular side of the membrane. Cys-130 and Cys-207 form a disulfide bridge. Residues 133-153 (MSLFLQVNMYSSVFFLTWMSF) form a helical membrane-spanning segment. The Cytoplasmic portion of the chain corresponds to 154-175 (DRYIALARAMRCSLFRTKHHAR). Residues 176-194 (LSCGLIWMASVSATLVPFT) form a helical membrane-spanning segment. Over 195–220 (AVHLQHTDEACFCFADVREVQWLEVT) the chain is Extracellular. Residues 221–236 (LGFIVPFAIIGLCYSL) form a helical membrane-spanning segment. Residues 237 to 259 (IVRVLVRAHRHRGLRPRRQKALR) are Cytoplasmic-facing. A helical transmembrane segment spans residues 260–280 (MILAVVLVFFVCWLPENVFIS). At 281 to 306 (VHLLQRTQPGAAPCKQSFRHAHPLTG) the chain is on the extracellular side. Residues 307-327 (HIVNLAAFSNSCLNPLIYSFL) traverse the membrane as a helical segment. The Cytoplasmic portion of the chain corresponds to 328 to 375 (GETFRDKLRLYIEQKTNLPALNRFCHAALKAVIPDSTEQSDVRFSSAV).

The protein belongs to the G-protein coupled receptor 1 family. As to quaternary structure, homodimer. Heterodimer; heterodimerizes with other G-protein-coupled receptor (GPCRs) like CRHR1, HTR1A and PAQR8. Interacts (via C-terminus tail motif) with DLG4 (via N-terminus tandem pair of PDZ domains); the interaction is direct and induces the increase of GPER1 protein levels residing at the plasma membrane surface in a estradiol-independent manner. Interacts with RAMP3; the interaction confers proper subcellular localization and function in cardioprotection. Interacts with KRT7 and KRT8. Interacts with EGFR; the interaction increases after agonist-induced stimulation in cancer-associated fibroblasts (CAF). Interacts with EGFR and ESR1. In terms of processing, ubiquitinated; ubiquitination occurs at the plasma membrane and leads to proteasome-mediated degradation. Glycosylated. As to expression, expressed in placenta, endothelial and epithelial cells, non laboring and laboring term myometrium, fibroblasts and cancer-associated fibroblasts (CAF), prostate cancer cells and invasive adenocarcinoma (at protein level). Ubiquitously expressed, but is most abundant in placenta. In brain regions, expressed as a 2.8 kb transcript in basal forebrain, frontal cortex, thalamus, hippocampus, caudate and putamen.

The protein localises to the nucleus. It is found in the cytoplasm. It localises to the perinuclear region. Its subcellular location is the cytoskeleton. The protein resides in the cell membrane. The protein localises to the basolateral cell membrane. It is found in the cytoplasmic vesicle membrane. It localises to the early endosome. Its subcellular location is the recycling endosome. The protein resides in the golgi apparatus membrane. The protein localises to the golgi apparatus. It is found in the trans-Golgi network. It localises to the endoplasmic reticulum membrane. Its subcellular location is the cell projection. The protein resides in the dendrite. The protein localises to the dendritic spine membrane. It is found in the axon. It localises to the postsynaptic density. Its subcellular location is the mitochondrion membrane. Its function is as follows. G-protein coupled estrogen receptor that binds to 17-beta-estradiol (E2) with high affinity, leading to rapid and transient activation of numerous intracellular signaling pathways. Stimulates cAMP production, calcium mobilization and tyrosine kinase Src inducing the release of heparin-bound epidermal growth factor (HB-EGF) and subsequent transactivation of the epidermal growth factor receptor (EGFR), activating downstream signaling pathways such as PI3K/Akt and ERK/MAPK. Mediates pleiotropic functions among others in the cardiovascular, endocrine, reproductive, immune and central nervous systems. Has a role in cardioprotection by reducing cardiac hypertrophy and perivascular fibrosis in a RAMP3-dependent manner. Regulates arterial blood pressure by stimulating vasodilation and reducing vascular smooth muscle and microvascular endothelial cell proliferation. Plays a role in blood glucose homeostasis contributing to the insulin secretion response by pancreatic beta cells. Triggers mitochondrial apoptosis during pachytene spermatocyte differentiation. Stimulates uterine epithelial cell proliferation. Enhances uterine contractility in response to oxytocin. Contributes to thymic atrophy by inducing apoptosis. Attenuates TNF-mediated endothelial expression of leukocyte adhesion molecules. Promotes neuritogenesis in developing hippocampal neurons. Plays a role in acute neuroprotection against NMDA-induced excitotoxic neuronal death. Increases firing activity and intracellular calcium oscillations in luteinizing hormone-releasing hormone (LHRH) neurons. Inhibits early osteoblast proliferation at growth plate during skeletal development. Inhibits mature adipocyte differentiation and lipid accumulation. Involved in the recruitment of beta-arrestin 2 ARRB2 at the plasma membrane in epithelial cells. Also functions as a receptor for aldosterone mediating rapid regulation of vascular contractibility through the PI3K/ERK signaling pathway. Involved in cancer progression regulation. Stimulates cancer-associated fibroblast (CAF) proliferation by a rapid genomic response through the EGFR/ERK transduction pathway. Associated with EGFR, may act as a transcription factor activating growth regulatory genes (c-fos, cyclin D1). Promotes integrin alpha-5/beta-1 and fibronectin (FN) matrix assembly in breast cancer cells. In Homo sapiens (Human), this protein is G-protein coupled estrogen receptor 1.